Here is a 722-residue protein sequence, read N- to C-terminus: Bifunctional UDP-N-acetylglucosamine 2-epimerase/N-acetylmannosamine kinase (722 aa).

Residues Arg19, Ser23, Arg113, His220, and Asn253 each coordinate UDP. Residues Lys259, Glu271, Lys280, and His281 each contribute to the CMP-N-acetyl-beta-neuraminate site. Residues Val282, Ser301, Ser302, Glu307, and Arg321 each contribute to the UDP site. The segment at 406–722 (TLSALAVDLG…VLDYTTRRIH (317 aa)) is N-acetylmannosamine kinase. A Mg(2+)-binding site is contributed by Asp413. Gly416 serves as a coordination point for an N-acyl-D-mannosamine 6-phosphate. The ADP site is built by Thr417, Asn418, and Arg420. The an N-acyl-D-mannosamine 6-phosphate site is built by Gly476, Arg477, Thr489, Asn516, Asp517, and Gly545. Residues Gly476, Arg477, Thr489, Asn516, and Asp517 each coordinate an N-acyl-D-mannosamine. Residue Asp517 is part of the active site. An N-acyl-D-mannosamine is bound by residues Glu566 and His569. His569 lines the an N-acyl-D-mannosamine 6-phosphate pocket. Residues His569, Cys579, Cys581, and Cys586 each contribute to the Zn(2+) site. Residue Glu588 coordinates an N-acyl-D-mannosamine 6-phosphate. Glu588 provides a ligand contact to an N-acyl-D-mannosamine.

In the N-terminal section; belongs to the UDP-N-acetylglucosamine 2-epimerase family. The protein in the C-terminal section; belongs to the ROK (NagC/XylR) family. Homodimer. Homotetramer. Homohexamer. The hexameric form exhibits both enzyme activities, whereas the dimeric form only catalyzes the phosphorylation of N-acyl-D-mannosamine. In terms of processing, phosphorylated. Phosphorylation by PKC activates the UDP-N-acetylglucosamine 2-epimerase activity. In terms of tissue distribution, widely expressed. Highest expression in liver. Also found at high levels in lung, brain and kidney.

It is found in the cytoplasm. Its subcellular location is the cytosol. It catalyses the reaction UDP-N-acetyl-alpha-D-glucosamine + H2O = aldehydo-N-acetyl-D-mannosamine + UDP + H(+). The catalysed reaction is an N-acyl-D-mannosamine + ATP = an N-acyl-D-mannosamine 6-phosphate + ADP + H(+). It participates in amino-sugar metabolism; N-acetylneuraminate biosynthesis. Its activity is regulated as follows. The UDP-N-acetylglucosamine 2-epimerase activity, in contrast to the N-acetylmannosamine kinase activity, exhibits allosteric regulation by cytidine monophosphate-N-acetylneuraminic acid (CMP-Neu5Ac), the end product of neuraminic acid biosynthesis. Moreover, the activity is contingent upon the oligomeric state of the enzyme. The monomeric form is inactive, while the dimeric form selectively catalyzes the phosphorylation of N-acetylmannosamine. The hexameric form, on the other hand, demonstrates full proficiency in both enzyme activities. Furthermore, the UDP-N-acetylglucosamine 2-epimerase activity is increased by PKC-mediated phosphorylation. In terms of biological role, bifunctional enzyme that possesses both UDP-N-acetylglucosamine 2-epimerase and N-acetylmannosamine kinase activities, and serves as the initiator of the biosynthetic pathway leading to the production of N-acetylneuraminic acid (NeuAc), a critical precursor in the synthesis of sialic acids. By catalyzing this pivotal and rate-limiting step in sialic acid biosynthesis, this enzyme assumes a pivotal role in governing the regulation of cell surface sialylation, playing a role in embryonic angiogenesis. Sialic acids represent a category of negatively charged sugars that reside on the surface of cells as terminal components of glycoconjugates and mediate important functions in various cellular processes, including cell adhesion, signal transduction, and cellular recognition. This is Bifunctional UDP-N-acetylglucosamine 2-epimerase/N-acetylmannosamine kinase from Mus musculus (Mouse).